The primary structure comprises 521 residues: Citrinin biosynthesis cluster MFS transporter ctnC (521 aa).

A disordered region spans residues 1–29; the sequence is MKEEIDAPVSTDASGTDLENARDQPSGEK. 8 consecutive transmembrane segments (helical) span residues 58–78, 95–115, 124–144, 155–175, 182–202, 237–257, 313–333, and 349–369; these read SLIT…SSVF, VMTL…LVWG, LKPL…VAVA, FFLG…LADF, AIAI…GPIM, WTAW…FLTL, ILVC…LFFV, and GIAA…CLLV. Asn-383 carries an N-linked (GlcNAc...) asparagine glycan. Transmembrane regions (helical) follow at residues 392–412, 417–437, 465–485, and 489–509; these read LPPM…FGWT, ISWA…LMIW, AVSA…GVDW, and LLGF…FYGA.

This sequence belongs to the major facilitator superfamily. CAR1 family.

The protein resides in the membrane. Functionally, MFS transporter; part of the gene cluster that mediates the biosynthesis the mycotoxin citrinin, a hepato-nephrotoxic compound to humans due to inhibition of respiration complex III. The sequence is that of Citrinin biosynthesis cluster MFS transporter ctnC (ctnC) from Monascus purpureus (Red mold).